The chain runs to 241 residues: Enolase-phosphatase E1 (241 aa).

Aspartate 9 and glutamate 11 together coordinate Mg(2+). Substrate-binding positions include serine 133–serine 134 and lysine 172. Residue aspartate 198 coordinates Mg(2+).

This sequence belongs to the HAD-like hydrolase superfamily. MasA/MtnC family. As to quaternary structure, monomer. Requires Mg(2+) as cofactor.

The protein resides in the cytoplasm. Its subcellular location is the nucleus. The enzyme catalyses 5-methylsulfanyl-2,3-dioxopentyl phosphate + H2O = 1,2-dihydroxy-5-(methylsulfanyl)pent-1-en-3-one + phosphate. It participates in amino-acid biosynthesis; L-methionine biosynthesis via salvage pathway; L-methionine from S-methyl-5-thio-alpha-D-ribose 1-phosphate: step 3/6. Its pathway is amino-acid biosynthesis; L-methionine biosynthesis via salvage pathway; L-methionine from S-methyl-5-thio-alpha-D-ribose 1-phosphate: step 4/6. In terms of biological role, bifunctional enzyme that catalyzes the enolization of 2,3-diketo-5-methylthiopentyl-1-phosphate (DK-MTP-1-P) into the intermediate 2-hydroxy-3-keto-5-methylthiopentenyl-1-phosphate (HK-MTPenyl-1-P), which is then dephosphorylated to form the acireductone 1,2-dihydroxy-3-keto-5-methylthiopentene (DHK-MTPene). The chain is Enolase-phosphatase E1 from Scheffersomyces stipitis (strain ATCC 58785 / CBS 6054 / NBRC 10063 / NRRL Y-11545) (Yeast).